We begin with the raw amino-acid sequence, 212 residues long: Thymidylate kinase (212 aa).

11 to 18 serves as a coordination point for ATP; that stretch reads GLEGAGKS.

This sequence belongs to the thymidylate kinase family.

It carries out the reaction dTMP + ATP = dTDP + ADP. In terms of biological role, phosphorylation of dTMP to form dTDP in both de novo and salvage pathways of dTTP synthesis. This Vibrio vulnificus (strain CMCP6) protein is Thymidylate kinase.